The chain runs to 1181 residues: Cellulose synthase-like protein D5 (1181 aa).

The span at Met-1 to Val-17 shows a compositional bias: polar residues. Disordered stretches follow at residues Met-1–Arg-70 and Lys-202–Met-229. The segment covering Ser-48 to Ser-59 has biased composition (low complexity). Residues Asp-210–Glu-222 are compositionally biased toward acidic residues. 2 consecutive transmembrane segments (helical) span residues Ala-312–Leu-332 and Ala-343–Leu-363. Asp-443 is an active-site residue. Residues Val-497–Glu-542 adopt a coiled-coil conformation. Residue Asp-884 is part of the active site. A run of 6 helical transmembrane segments spans residues Leu-966–Val-986, Ile-991–Glu-1011, Pro-1038–Leu-1058, Phe-1082–Leu-1102, Leu-1116–Gly-1136, and Thr-1146–Ile-1166.

The protein belongs to the glycosyltransferase 2 family. Plant cellulose synthase-like D subfamily. Expressed in vascular tissues.

Its subcellular location is the golgi apparatus membrane. Functionally, involved in stem and root growth. Possesses xylan and homogalacturonan synthase activity. The sequence is that of Cellulose synthase-like protein D5 (CSLD5) from Arabidopsis thaliana (Mouse-ear cress).